Here is a 304-residue protein sequence, read N- to C-terminus: Acetyl-coenzyme A carboxylase carboxyl transferase subunit beta (304 aa).

The region spanning 25 to 294 is the CoA carboxyltransferase N-terminal domain; sequence VWTKCDSCGQ…PSVVESKADT (270 aa). Residues cysteine 29, cysteine 32, cysteine 48, and cysteine 51 each coordinate Zn(2+). A C4-type zinc finger spans residues 29 to 51; it reads CDSCGQVLYRAELERNLEVCPKC.

The protein belongs to the AccD/PCCB family. In terms of assembly, acetyl-CoA carboxylase is a heterohexamer composed of biotin carboxyl carrier protein (AccB), biotin carboxylase (AccC) and two subunits each of ACCase subunit alpha (AccA) and ACCase subunit beta (AccD). The cofactor is Zn(2+).

The protein localises to the cytoplasm. The enzyme catalyses N(6)-carboxybiotinyl-L-lysyl-[protein] + acetyl-CoA = N(6)-biotinyl-L-lysyl-[protein] + malonyl-CoA. It functions in the pathway lipid metabolism; malonyl-CoA biosynthesis; malonyl-CoA from acetyl-CoA: step 1/1. Functionally, component of the acetyl coenzyme A carboxylase (ACC) complex. Biotin carboxylase (BC) catalyzes the carboxylation of biotin on its carrier protein (BCCP) and then the CO(2) group is transferred by the transcarboxylase to acetyl-CoA to form malonyl-CoA. The sequence is that of Acetyl-coenzyme A carboxylase carboxyl transferase subunit beta from Yersinia pseudotuberculosis serotype O:1b (strain IP 31758).